The chain runs to 341 residues: Short chain dehydrogenase virL (341 aa).

NADP(+)-binding residues include leucine 49, lysine 74, aspartate 97, asparagine 123, tyrosine 210, and lysine 214. Tyrosine 210 serves as the catalytic Proton donor. The active-site Lowers pKa of active site Tyr is lysine 214.

It belongs to the short-chain dehydrogenases/reductases (SDR) family.

It participates in secondary metabolite biosynthesis. In terms of biological role, short chain dehydrogenase; part of the gene cluster that mediates the biosynthesis of virensols and trichoxide, fungal natural products that contain or are derived from a salicylaldehyde core. The pathway begins with the synthesis of the reduced chain in virensol C by the highly reducing polyketide synthase virA via condensation of one acetate and 8 malonate units. VirA has interesting programming rules since the first 2 ketides are fully reduced, the 3 following ketides undergo beta-dehydration, and the last 3 ketides are only reduced to beta-hydroxys to yield the trihydroxy portion. The production of aldehyde virensol C by virA alone is surprising, since virA does not contain a reductase (R) domain that is typically associated with reductive product release in HRPKS. The cupin-domain enzyme virC is involved in enhancing virA product turnover. The short-chain dehydrogenase virB then oxidizes the C-7 alcohol of virensol C to a ketone, yielding virensol D. Virensol D is further transformed to salicylaldehyde 5-deoxyaurocitrin by the short-chain dehydrogenase virD. VirD catalyzes the dehydrogenation of C-3 to form the beta-ketone aldehyde, which is followed by the generation of the nucleophilic C-2 that is required for the intramolecular aldol condensation between C-2 and C-7, itself followed by dehydration and aromatization which leads to salicylaldehyde 5-deoxyaurocitrin. While the dehydrogenation of virensol D is definitely catalyzed by virD, the aldol condensation and dehydration may be uncatalyzed or assisted by virD. The short chain dehydrogenase virG then converts salicylaldehyde 5-deoxyaurocitrin into virensol B which is further hydroxylated by the cytochrome P450 monooxygenase virE to yield the hydroquinone virensol A. VirI then may oxidize virensol A to form the quinone, while virH performs the epoxidation. Finally, the two remaining short-chain dehydrogenases, virK and virL, are probably responsible for reducing the ketones to the corresponding alcohols to furnish the epoxycyclohexanol structure in trichoxide. The sequence is that of Short chain dehydrogenase virL from Hypocrea virens (strain Gv29-8 / FGSC 10586) (Gliocladium virens).